The chain runs to 279 residues: Protein phosphatase 1 regulatory subunit 3E (279 aa).

2 positions are modified to phosphoserine: Ser16 and Ser33. A disordered region spans residues 28–86 (RSQRPSLEEEPEEEPGEGGTRFGARSRAHAPSRGRRARSAPAGGGGARAPRSRSPDTRK). Basic residues predominate over residues 51-65 (ARSRAHAPSRGRRAR). Ser66 is modified (phosphoserine). The PP1-binding motif motif lies at 87–90 (RVRF). Residues 154 to 259 (AARLLTQRIC…NNGGRDYALR (106 aa)) form the CBM21 domain. Positions 176-198 (GSARVVDLAYEKRVSVRWSADGW) are glycogen-binding motif. A substrate-binding motif region spans residues 248–256 (WDNNGGRDY).

Expressed in skeletal muscle and heart with barely detectable levels in liver.

Its function is as follows. Acts as a glycogen-targeting subunit for PP1. PP1 is involved in glycogen metabolism and contributes to the activation of glycogen synthase leading to an increase in glycogen synthesis. This is Protein phosphatase 1 regulatory subunit 3E (PPP1R3E) from Homo sapiens (Human).